The following is a 315-amino-acid chain: MKMSKLSDLEGHEDRVWNVAWNPSGTILASCGGDKSIRLWGLEGGSWVCKSVLLDGHQRTVRGVSWSNCGRYLASSSFDGTTCIWRRQDDTFESCATLEGHENEVKACGWSPSGRFLATCSRDKTVWIWEVGEDEEFECASVQTCHSQDVKKVLWHPDRDELASASYDNTIRFFCEEVDDWQCYCTLDKHASTVWGLSFGPGPEPQLASCAADGSVYVWGTKGDRRSWELCGTLERHPRPVYDVSWCRTRGFLATACGDNAVRVFVKDGGDCSWRLGCTLTQAHSQDVNSVSWSPSGGLLASAGDDGYVRLWQID.

7 WD repeats span residues 11-50 (GHEDRVWNVAWNPSGTILASCGGDKSIRLWGLEGGSWVCK), 56-95 (GHQRTVRGVSWSNCGRYLASSSFDGTTCIWRRQDDTFESC), 100-139 (GHENEVKACGWSPSGRFLATCSRDKTVWIWEVGEDEEFEC), 145-188 (CHSQ…CTLD), 189-229 (KHAS…RSWE), 236-275 (RHPRPVYDVSWCRTRGFLATACGDNAVRVFVKDGGDCSWR), and 283-315 (AHSQDVNSVSWSPSGGLLASAGDDGYVRLWQID).

It belongs to the WD repeat CIA1 family.

Its function is as follows. Essential component of the cytosolic iron-sulfur (Fe/S) protein assembly machinery. Required for the maturation of extramitochondrial Fe/S proteins. The sequence is that of Probable cytosolic iron-sulfur protein assembly protein CIAO1 homolog from Ixodes scapularis (Black-legged tick).